We begin with the raw amino-acid sequence, 514 residues long: Bifunctional purine biosynthesis protein PurH (514 aa).

The region spanning 1–146 is the MGS-like domain; the sequence is MARLALLSVS…KNFAHLAVLC (146 aa).

Belongs to the PurH family.

It carries out the reaction (6R)-10-formyltetrahydrofolate + 5-amino-1-(5-phospho-beta-D-ribosyl)imidazole-4-carboxamide = 5-formamido-1-(5-phospho-D-ribosyl)imidazole-4-carboxamide + (6S)-5,6,7,8-tetrahydrofolate. The catalysed reaction is IMP + H2O = 5-formamido-1-(5-phospho-D-ribosyl)imidazole-4-carboxamide. It participates in purine metabolism; IMP biosynthesis via de novo pathway; 5-formamido-1-(5-phospho-D-ribosyl)imidazole-4-carboxamide from 5-amino-1-(5-phospho-D-ribosyl)imidazole-4-carboxamide (10-formyl THF route): step 1/1. It functions in the pathway purine metabolism; IMP biosynthesis via de novo pathway; IMP from 5-formamido-1-(5-phospho-D-ribosyl)imidazole-4-carboxamide: step 1/1. This chain is Bifunctional purine biosynthesis protein PurH, found in Nostoc punctiforme (strain ATCC 29133 / PCC 73102).